A 111-amino-acid chain; its full sequence is Probable 4-amino-4-deoxy-L-arabinose-phosphoundecaprenol flippase subunit ArnE (111 aa).

Residues 1-35 are Cytoplasmic-facing; sequence MIWLTLVFASLLSVAGQLCQKQATCFVAINKRRKH. Residues 36 to 56 traverse the membrane as a helical segment; that stretch reads IVLWLGLALACLGLAMVLWLL. The EamA domain occupies 40-109; the sequence is LGLALACLGL…IIGGIVILGS (70 aa). At 57 to 60 the chain is on the periplasmic side; that stretch reads VLQN. The helical transmembrane segment at 61 to 81 threads the bilayer; sequence VPVGIAYPMLSLNFVWVTLAA. At 82 to 87 the chain is on the cytoplasmic side; the sequence is VKLWHE. The helical transmembrane segment at 88-108 threads the bilayer; sequence PVSPRHWCGVAFIIGGIVILG. Topologically, residues 109–111 are periplasmic; that stretch reads STV.

Belongs to the ArnE family. In terms of assembly, heterodimer of ArnE and ArnF.

Its subcellular location is the cell inner membrane. Its pathway is bacterial outer membrane biogenesis; lipopolysaccharide biosynthesis. Its function is as follows. Translocates 4-amino-4-deoxy-L-arabinose-phosphoundecaprenol (alpha-L-Ara4N-phosphoundecaprenol) from the cytoplasmic to the periplasmic side of the inner membrane. The sequence is that of Probable 4-amino-4-deoxy-L-arabinose-phosphoundecaprenol flippase subunit ArnE from Escherichia coli (strain ATCC 8739 / DSM 1576 / NBRC 3972 / NCIMB 8545 / WDCM 00012 / Crooks).